We begin with the raw amino-acid sequence, 506 residues long: Lysine--tRNA ligase (506 aa).

Mg(2+) is bound by residues E416 and E423.

The protein belongs to the class-II aminoacyl-tRNA synthetase family. In terms of assembly, homodimer. It depends on Mg(2+) as a cofactor.

Its subcellular location is the cytoplasm. It catalyses the reaction tRNA(Lys) + L-lysine + ATP = L-lysyl-tRNA(Lys) + AMP + diphosphate. The polypeptide is Lysine--tRNA ligase (Pelotomaculum thermopropionicum (strain DSM 13744 / JCM 10971 / SI)).